Consider the following 398-residue polypeptide: Putative F-box protein At3g17620 (398 aa).

The F-box domain occupies 1–45 (MMSDLPRDLLEERLSRVPVKSLREARFTCKNWKTLSKKRSFTKKH).

The protein is Putative F-box protein At3g17620 of Arabidopsis thaliana (Mouse-ear cress).